The primary structure comprises 181 residues: MAADANNLIWIDLEMTGLEPDVDRVIEIATLVTDQELNIIGQGPVIAIHQSDEVLAAMDDWNQKHHGESGLIERVRASQVNEAEAVAQTIAFLAQYVPKGVSPMCGNSVGQDRRFLNRYMRELEDYFHYRNLDVSTVKELVKRWSPETMAGFKKQNTHQALQDIQESIAELQYYRSKVFKI.

The Exonuclease domain occupies 8 to 171; sequence LIWIDLEMTG…QDIQESIAEL (164 aa). Y129 is an active-site residue.

The protein belongs to the oligoribonuclease family.

The protein resides in the cytoplasm. 3'-to-5' exoribonuclease specific for small oligoribonucleotides. This Shewanella oneidensis (strain ATCC 700550 / JCM 31522 / CIP 106686 / LMG 19005 / NCIMB 14063 / MR-1) protein is Oligoribonuclease.